The chain runs to 440 residues: uncharacterized protein (440 aa).

The first 19 residues, methionine 1–alanine 19, serve as a signal peptide directing secretion.

This is an uncharacterized protein from Rickettsia prowazekii (strain Madrid E).